We begin with the raw amino-acid sequence, 560 residues long: MTPQKSDACSDPVYTVGDYLLDRLAELGVSEIFGVPGDYNLQFLDHIVAHPTIRWVGSANELNAGYAADGYGRLRGMSAVVTTFGVGELSVTNAIAGSYAEHVPVVHIVGGPTKDAQGTRRALHHSLGDGDFEHFLRISREITCAQANLMPATAGREIDRVLSEVREQKRPGYILLSSDVARFPTEPPAAPLPRYPGGTSPRALSLFTKAAIELIADHQLTVLADLLVHRLQAVKELEALLAADVVPHATLMWGKSLLDESSPNFLGIYAGAASAERVRAAIEGAPVLVTAGVVFTNMVSGFFSQRIDPARTIDIGQYQSSVADQVFAPLEMSAALQALATILTGRGISSPPVVPPPAEPPPAMPARDEPLTQQMVWDRVCSALTPGNVVLADQGTSFYGMADHRLPQGVTFIGQPLWGSIGYTLPAAVGAAVAHPDRRTVLLIGDGAAQLTVQELGTFSREGLSPVIVVVNNDGYTVERAIHGETAPYNDIVSWNWTELPSALGVTNHLAFRAQTYGQLDDALTVAAARRDRMVLVEVVLPRLEIPRLLGQLVGSMAPQ.

E61 contacts thiamine diphosphate. The thiamine pyrophosphate binding stretch occupies residues 396–478 (TSFYGMADHR…VVVNNDGYTV (83 aa)). Mg(2+) contacts are provided by D446, N473, and G475.

Belongs to the TPP enzyme family. A metal cation is required as a cofactor. The cofactor is thiamine diphosphate.

Decarboxylates branched-chain and aromatic alpha-keto acids to aldehydes. The sequence is that of Alpha-keto-acid decarboxylase (kdc) from Mycobacterium tuberculosis (strain CDC 1551 / Oshkosh).